A 312-amino-acid polypeptide reads, in one-letter code: Olfactory receptor 8G50 (312 aa).

The Extracellular segment spans residues 1–28; it reads MAYSNQSRVTEFIISGLTNKPELQLPLF. Asparagine 5 carries an N-linked (GlcNAc...) asparagine glycan. Residues 29 to 49 traverse the membrane as a helical segment; the sequence is LLFLGIYLFTVLGNLGMIILI. The Cytoplasmic portion of the chain corresponds to 50–56; sequence LLSSHLH. A helical membrane pass occupies residues 57-77; the sequence is TPMYFFLSSLSFIDLCYSTII. The Extracellular portion of the chain corresponds to 78-99; that stretch reads TPKMLVNFVTTKNVISYQECMT. A disulfide bridge links cysteine 97 with cysteine 189. Residues 100–120 traverse the membrane as a helical segment; it reads QLYFFIAFVISECHMLAAMAY. At 121-143 the chain is on the cytoplasmic side; that stretch reads DRYVAICNPLLYNVTMSYQVCSW. Residues 144–164 traverse the membrane as a helical segment; the sequence is MVGGVYGMGFIGAAIHTFCML. At 165-204 the chain is on the extracellular side; it reads RVVFCKDNIINHYFCDLFPLMELACSSTYVNEVVLLSLSA. A helical transmembrane segment spans residues 205–225; that stretch reads FNIFIPTLTILGSYIFIIISI. Topologically, residues 226-244 are cytoplasmic; sequence LRIKSTEGRFKAFSTCSSH. The chain crosses the membrane as a helical span at residues 245–265; sequence FSAVSVFFGSLAFMYLQPFSV. The Extracellular segment spans residues 266–274; sequence SSKDKGKVS. The chain crosses the membrane as a helical span at residues 275-292; that stretch reads SVFYTTIVPMLNPMIYSL. The Cytoplasmic segment spans residues 293 to 312; sequence RNRDVKLALNKLFQKKKFHV.

This sequence belongs to the G-protein coupled receptor 1 family.

Its subcellular location is the cell membrane. In terms of biological role, odorant receptor. This Mus musculus (Mouse) protein is Olfactory receptor 8G50.